Reading from the N-terminus, the 295-residue chain is Bifunctional protein FolD (295 aa).

NADP(+) is bound by residues 166-168 (GRS), S191, and I232.

The protein belongs to the tetrahydrofolate dehydrogenase/cyclohydrolase family. As to quaternary structure, homodimer.

The catalysed reaction is (6R)-5,10-methylene-5,6,7,8-tetrahydrofolate + NADP(+) = (6R)-5,10-methenyltetrahydrofolate + NADPH. It carries out the reaction (6R)-5,10-methenyltetrahydrofolate + H2O = (6R)-10-formyltetrahydrofolate + H(+). It participates in one-carbon metabolism; tetrahydrofolate interconversion. Functionally, catalyzes the oxidation of 5,10-methylenetetrahydrofolate to 5,10-methenyltetrahydrofolate and then the hydrolysis of 5,10-methenyltetrahydrofolate to 10-formyltetrahydrofolate. This chain is Bifunctional protein FolD, found in Rhodopseudomonas palustris (strain HaA2).